The chain runs to 561 residues: Tudor and KH domain-containing protein (561 aa).

KH domains follow at residues 52–115 (DIEI…KAAI) and 124–190 (PVSE…KHLI). Glycyl lysine isopeptide (Lys-Gly) (interchain with G-Cter in ubiquitin) cross-links involve residues Lys65, Lys76, Lys110, Lys112, Lys152, Lys175, Lys181, Lys187, Lys193, Lys256, and Lys267. The tract at residues 219–262 (SVRREDMTEPGGAGEPALWKNTSSSMEPTAPLVTPPPKGGGDMA) is disordered. Ser278 carries the phosphoserine modification. In terms of domain architecture, Tudor spans 353–412 (TVHVGDIVAAPLPTNGSWYRARVLGTLENGNLDLYFVDFGDNGDCPLKDLRALRSDFLSL). Residues Lys479, Lys510, and Lys529 each participate in a glycyl lysine isopeptide (Lys-Gly) (interchain with G-Cter in ubiquitin) cross-link.

The protein belongs to the Tdrkh family. As to quaternary structure, interacts with (symmetrically methylated) PIWIL1, PIWIL2 and PIWIL4. Post-translationally, ubiquitinated by PRKN during mitophagy, leading to its degradation and enhancement of mitophagy. Deubiquitinated by USP30.

The protein localises to the cytoplasm. It localises to the mitochondrion. Functionally, participates in the primary piRNA biogenesis pathway and is required during spermatogenesis to repress transposable elements and prevent their mobilization, which is essential for the germline integrity. The piRNA metabolic process mediates the repression of transposable elements during meiosis by forming complexes composed of piRNAs and Piwi proteins and govern the methylation and subsequent repression of transposons. Required for the final steps of primary piRNA biogenesis by participating in the processing of 31-37 nt intermediates into mature piRNAs. May act in pi-bodies and piP-bodies by transferring piRNA precursors or intermediates to or between these granules. This chain is Tudor and KH domain-containing protein (TDRKH), found in Homo sapiens (Human).